A 240-amino-acid polypeptide reads, in one-letter code: Lactate utilization protein C (240 aa).

Belongs to the LutC/YkgG family.

Functionally, is involved in L-lactate degradation and allows cells to grow with lactate as the sole carbon source. The chain is Lactate utilization protein C from Geobacillus kaustophilus (strain HTA426).